A 453-amino-acid chain; its full sequence is Bifunctional protein GlmU (453 aa).

Residues 1 to 226 are pyrophosphorylase; sequence MKFSAVILAA…PIEVEGVNDR (226 aa). UDP-N-acetyl-alpha-D-glucosamine contacts are provided by residues 8–11, Lys22, Gln73, 78–79, 100–102, Gly137, Glu151, Asn166, and Asn224; these read LAAG, GT, and YGD. Asp102 provides a ligand contact to Mg(2+). Asn224 is a Mg(2+) binding site. A linker region spans residues 227 to 247; it reads AQLARLERAFQAAQAKKLLEQ. The tract at residues 248 to 453 is N-acetyltransferase; it reads GVMLRDPARF…TGWQRPVKKK (206 aa). Arg330 and Lys348 together coordinate UDP-N-acetyl-alpha-D-glucosamine. His360 functions as the Proton acceptor in the catalytic mechanism. Residues Tyr363 and Asn374 each contribute to the UDP-N-acetyl-alpha-D-glucosamine site. Acetyl-CoA is bound by residues Ala377, 383–384, Ser402, Ala420, and Arg437; that span reads NY.

In the N-terminal section; belongs to the N-acetylglucosamine-1-phosphate uridyltransferase family. It in the C-terminal section; belongs to the transferase hexapeptide repeat family. As to quaternary structure, homotrimer. Requires Mg(2+) as cofactor.

The protein resides in the cytoplasm. The catalysed reaction is alpha-D-glucosamine 1-phosphate + acetyl-CoA = N-acetyl-alpha-D-glucosamine 1-phosphate + CoA + H(+). It carries out the reaction N-acetyl-alpha-D-glucosamine 1-phosphate + UTP + H(+) = UDP-N-acetyl-alpha-D-glucosamine + diphosphate. It functions in the pathway nucleotide-sugar biosynthesis; UDP-N-acetyl-alpha-D-glucosamine biosynthesis; N-acetyl-alpha-D-glucosamine 1-phosphate from alpha-D-glucosamine 6-phosphate (route II): step 2/2. The protein operates within nucleotide-sugar biosynthesis; UDP-N-acetyl-alpha-D-glucosamine biosynthesis; UDP-N-acetyl-alpha-D-glucosamine from N-acetyl-alpha-D-glucosamine 1-phosphate: step 1/1. Its pathway is bacterial outer membrane biogenesis; LPS lipid A biosynthesis. Its function is as follows. Catalyzes the last two sequential reactions in the de novo biosynthetic pathway for UDP-N-acetylglucosamine (UDP-GlcNAc). The C-terminal domain catalyzes the transfer of acetyl group from acetyl coenzyme A to glucosamine-1-phosphate (GlcN-1-P) to produce N-acetylglucosamine-1-phosphate (GlcNAc-1-P), which is converted into UDP-GlcNAc by the transfer of uridine 5-monophosphate (from uridine 5-triphosphate), a reaction catalyzed by the N-terminal domain. The chain is Bifunctional protein GlmU from Vibrio vulnificus (strain YJ016).